Consider the following 145-residue polypeptide: Ribonuclease H (145 aa).

The region spanning 1-142 (MDTPVYLYTD…ADDLANRGAA (142 aa)) is the RNase H type-1 domain. Residues Asp10, Glu48, Asp70, and Asp134 each coordinate Mg(2+).

Belongs to the RNase H family. As to quaternary structure, monomer. It depends on Mg(2+) as a cofactor.

Its subcellular location is the cytoplasm. The catalysed reaction is Endonucleolytic cleavage to 5'-phosphomonoester.. Endonuclease that specifically degrades the RNA of RNA-DNA hybrids. In Neisseria gonorrhoeae (strain ATCC 700825 / FA 1090), this protein is Ribonuclease H.